The following is a 217-amino-acid chain: Flagellin B2 (217 aa).

A propeptide spanning residues 1-12 (MKVFEFLKGKRG) is cleaved from the precursor.

The protein belongs to the archaeal flagellin family.

It is found in the archaeal flagellum. Flagellin is the subunit protein which polymerizes to form the filaments of archaeal flagella. The chain is Flagellin B2 (flaB2) from Methanocaldococcus jannaschii (strain ATCC 43067 / DSM 2661 / JAL-1 / JCM 10045 / NBRC 100440) (Methanococcus jannaschii).